A 496-amino-acid chain; its full sequence is Cruciferin BnC2 (496 aa).

The signal sequence occupies residues 1–23 (MARLSSLLYFSITVLIFLHGSTA). 2 cysteine pairs are disulfide-bonded: Cys-30/Cys-63 and Cys-106/Cys-313. 2 Cupin type-1 domains span residues 35–269 (LNAL…RTAQ) and 319–468 (DNLD…EEAR). Thr-109 is subject to Phosphothreonine. The segment at 114–170 (SVFQPGSGSPFGEGQGQGQQGQGQGQGQGQGKGQQGQGKGQQGQSQGQQGQGQGFRD) is disordered. Residues 122 to 154 (SPFGEGQGQGQQGQGQGQGQGQGKGQQGQGKGQ) are compositionally biased toward gly residues. The residue at position 336 (Tyr-336) is a Phosphotyrosine. The residue at position 338 (Ser-338) is a Phosphoserine. Thr-432 is subject to Phosphothreonine.

Belongs to the 11S seed storage protein (globulins) family. Hexamer; each subunit is composed of an acidic and a basic chain derived from a single precursor and linked by a disulfide bond.

Functionally, this is a seed storage protein. This Brassica napus (Rape) protein is Cruciferin BnC2 (BnC2).